The primary structure comprises 174 residues: Crossover junction endodeoxyribonuclease RuvC (174 aa).

Active-site residues include aspartate 8, glutamate 68, and aspartate 140. Mg(2+) contacts are provided by aspartate 8, glutamate 68, and aspartate 140.

This sequence belongs to the RuvC family. Homodimer which binds Holliday junction (HJ) DNA. The HJ becomes 2-fold symmetrical on binding to RuvC with unstacked arms; it has a different conformation from HJ DNA in complex with RuvA. In the full resolvosome a probable DNA-RuvA(4)-RuvB(12)-RuvC(2) complex forms which resolves the HJ. Mg(2+) serves as cofactor.

The protein localises to the cytoplasm. It catalyses the reaction Endonucleolytic cleavage at a junction such as a reciprocal single-stranded crossover between two homologous DNA duplexes (Holliday junction).. In terms of biological role, the RuvA-RuvB-RuvC complex processes Holliday junction (HJ) DNA during genetic recombination and DNA repair. Endonuclease that resolves HJ intermediates. Cleaves cruciform DNA by making single-stranded nicks across the HJ at symmetrical positions within the homologous arms, yielding a 5'-phosphate and a 3'-hydroxyl group; requires a central core of homology in the junction. The consensus cleavage sequence is 5'-(A/T)TT(C/G)-3'. Cleavage occurs on the 3'-side of the TT dinucleotide at the point of strand exchange. HJ branch migration catalyzed by RuvA-RuvB allows RuvC to scan DNA until it finds its consensus sequence, where it cleaves and resolves the cruciform DNA. This Legionella pneumophila (strain Lens) protein is Crossover junction endodeoxyribonuclease RuvC.